A 572-amino-acid chain; its full sequence is Cytochrome P450 monooxygenase xilC (572 aa).

Cysteine 515 serves as a coordination point for heme.

This sequence belongs to the cytochrome P450 family. The cofactor is heme.

Its pathway is secondary metabolite biosynthesis. Its function is as follows. Cytochrome P450 monooxygenase; part of the gene cluster that mediates the biosynthesis of the 6-methyl-2-pyrone derivative xylariolide D. XilC hydroxylates the 5-alkyl-6-methyl-2-pyrone backbone called prexylariolide D, produced by the highly reducing polyketide synthase xilA, on its side chain to form xylariolide D. The sequence is that of Cytochrome P450 monooxygenase xilC from Penicillium crustosum (Blue mold fungus).